The following is an 86-amino-acid chain: Apolipoprotein C-I (86 aa).

Positions 1 to 26 are cleaved as a signal peptide; it reads MRLFLSLPVLVVVLLMILEGPGPAQG.

The protein belongs to the apolipoprotein C1 family.

Its subcellular location is the secreted. Its function is as follows. Inhibitor of lipoprotein binding to the low density lipoprotein (LDL) receptor, LDL receptor-related protein, and very low density lipoprotein (VLDL) receptor. Associates with high density lipoproteins (HDL) and the triacylglycerol-rich lipoproteins in the plasma and makes up about 10% of the protein of the VLDL and 2% of that of HDL. Appears to interfere directly with fatty acid uptake and is also the major plasma inhibitor of cholesteryl ester transfer protein (CETP). Binds free fatty acids and reduces their intracellular esterification. Modulates the interaction of APOE with beta-migrating VLDL and inhibits binding of beta-VLDL to the LDL receptor-related protein. The polypeptide is Apolipoprotein C-I (APOC1) (Saimiri boliviensis boliviensis (Bolivian squirrel monkey)).